Consider the following 296-residue polypeptide: Transcription factor bHLH99 (296 aa).

In terms of domain architecture, bHLH spans 99–150; sequence NQRMNHIAVERNRRKQMNHFLSILKSMMPLSYSQPNDQASIIEGTISYLKKL.

Homodimer. In terms of tissue distribution, expressed constitutively in roots, stems, and flowers.

Its subcellular location is the nucleus. The sequence is that of Transcription factor bHLH99 (BHLH99) from Arabidopsis thaliana (Mouse-ear cress).